Consider the following 337-residue polypeptide: F420-dependent glucose-6-phosphate dehydrogenase (337 aa).

Asp44 is a binding site for coenzyme F420-(gamma-Glu)n. His45 (proton donor) is an active-site residue. Residues Thr81 and 112–113 (TG) contribute to the coenzyme F420-(gamma-Glu)n site. The active-site Proton acceptor is Glu114. Coenzyme F420-(gamma-Glu)n-binding positions include Asn117, 180 to 181 (GG), and 183 to 184 (GV). Thr198, Lys201, Lys262, and Arg286 together coordinate substrate.

It belongs to the F420-dependent glucose-6-phosphate dehydrogenase family. As to quaternary structure, homodimer.

It carries out the reaction oxidized coenzyme F420-(gamma-L-Glu)(n) + D-glucose 6-phosphate + H(+) = 6-phospho-D-glucono-1,5-lactone + reduced coenzyme F420-(gamma-L-Glu)(n). Functionally, catalyzes the coenzyme F420-dependent oxidation of glucose 6-phosphate (G6P) to 6-phosphogluconolactone. The sequence is that of F420-dependent glucose-6-phosphate dehydrogenase from Kineococcus radiotolerans (strain ATCC BAA-149 / DSM 14245 / SRS30216).